Reading from the N-terminus, the 281-residue chain is HTH-type transcriptional activator RhaR (281 aa).

Residues 178 to 276 (DKLLAALAAS…GMSPGQWRQR (99 aa)) enclose the HTH araC/xylS-type domain. 2 DNA-binding regions (H-T-H motif) span residues 195–216 (ERFC…RQQT) and 243–266 (IGDI…SREI).

As to quaternary structure, binds DNA as a dimer.

The protein resides in the cytoplasm. Functionally, activates expression of the rhaSR operon in response to L-rhamnose. The polypeptide is HTH-type transcriptional activator RhaR (Klebsiella pneumoniae subsp. pneumoniae (strain ATCC 700721 / MGH 78578)).